Consider the following 399-residue polypeptide: PCI domain-containing protein 2 (399 aa).

The PCI domain occupies 210–391 (VTYKYYVGRK…QKLVVSKQNP (182 aa)).

The protein belongs to the CSN12 family.

This Danio rerio (Zebrafish) protein is PCI domain-containing protein 2 (pcid2).